A 230-amino-acid polypeptide reads, in one-letter code: Alpha-S1-casein (230 aa).

The N-terminal stretch at 1 to 15 is a signal peptide; sequence MKLLILTCLVAVALA. A phosphoserine mark is found at serine 33, serine 83, serine 85, serine 86, serine 87, and serine 88. Basic and acidic residues predominate over residues 60-83; sequence DELKDTRNEPTEDHIMEDTERKES. Disordered regions lie at residues 60 to 103 and 211 to 230; these read DELK…DILK and TPEG…PQWW. Positions 84–96 are enriched in low complexity; the sequence is GSSSSEEVVSSTT.

This sequence belongs to the alpha-casein family. Mammary gland specific. Secreted in milk.

The protein resides in the secreted. In terms of biological role, important role in the capacity of milk to transport calcium phosphate. In Camelus dromedarius (Dromedary), this protein is Alpha-S1-casein (CSN1S1).